The sequence spans 702 residues: MQHVTRTLVTTALPYANGPVHLGHLAGVYLPADIYVRYKRMKGEDVIHIGGSDEHGVPITITAEKEGISPQDVVDRYHRMNSEAFRKCGISFDYYGRTSSQGHHDTAKEFFLEIERKGIFRRKTEKLFFDAKAERFLSDRYVTGTCPICNNPEANGDQCEQCGTHLSPTELLNPKSKLSDATPELRDTMHWYFPLGRFQEALEAYVASHEHDWRPNVVNYTRTWLKQGLNDRAITRDLSWGIQVPLDDPEACGKVLYVWFDAVLGYISFTRQWAAEAGDESLWRAYWQDPESRVVNFIGKDNVVFHTLMFPAILMAWNEGRQSGIYNLADNVPASEFMNFEGRKFSKSRNYAVYLGEFLEKFPADTLRYSIAMNYPENKDTDFSWQDFQNRTNGELADTLGNFIKRSVDFTNSRFDGVVPFSCTDDDWNVLGIDWSQTIEKLDQAYEQFHIRETASLGMDIARSANRFLTESEPWKVIKTDREAAAKTMALSLNLCYALAITLYPVIPETAGRIYAMLGFEGSIDARIKRGVSAIEELLAPQLHKGHRIRKESEILFTKIEDADIEPELKKIEKLLADAEKLEAAALSQEMTFKPEISFDDFLKVDLRVATVLGAEKVKKAGKLLKLQLKVGTEARQVLAGIAQFYSPEEMVGKQVVLVANLAERTIRGEISQGMILAVEGADGRLCVVEPVGDEINGQQIQ.

Residues 14–24 carry the 'HIGH' region motif; the sequence is PYANGPVHLGH. Cys146, Cys149, Cys159, and Cys162 together coordinate Zn(2+). Positions 344–348 match the 'KMSKS' region motif; sequence KFSKS. Lys347 serves as a coordination point for ATP. The tRNA-binding domain occupies 601 to 702; it reads DFLKVDLRVA…GDEINGQQIQ (102 aa).

This sequence belongs to the class-I aminoacyl-tRNA synthetase family. MetG type 1 subfamily. In terms of assembly, homodimer. The cofactor is Zn(2+).

The protein localises to the cytoplasm. The catalysed reaction is tRNA(Met) + L-methionine + ATP = L-methionyl-tRNA(Met) + AMP + diphosphate. Functionally, is required not only for elongation of protein synthesis but also for the initiation of all mRNA translation through initiator tRNA(fMet) aminoacylation. The chain is Methionine--tRNA ligase from Chlorobium limicola (strain DSM 245 / NBRC 103803 / 6330).